The primary structure comprises 87 residues: Small ribosomal subunit protein uS17 (87 aa).

The protein belongs to the universal ribosomal protein uS17 family. Part of the 30S ribosomal subunit.

Its function is as follows. One of the primary rRNA binding proteins, it binds specifically to the 5'-end of 16S ribosomal RNA. The chain is Small ribosomal subunit protein uS17 from Hydrogenovibrio crunogenus (strain DSM 25203 / XCL-2) (Thiomicrospira crunogena).